The following is a 1330-amino-acid chain: Protein PUTATIVE RECOMBINATION INITIATION DEFECT 1 (1330 aa).

The interval 1310–1330 is disordered; the sequence is REGRVSPIQEETRQMQTERIV.

As to quaternary structure, interacts with SPO11-1. According to PubMed:28855712, may interact with SPO11-2; this is in contradiction with PubMed:9461215 which claims that it seems to not interact with SPO11-2. Binds to DFO, PRD3 and MTOPVIB. Facilitates an interaction between PRD3 and DFO. In terms of tissue distribution, expressed in flower buds.

The protein localises to the nucleus. Functionally, involved in DNA cleavage that forms the double-strand breaks (DSB) that initiate meiotic recombination. In Arabidopsis thaliana (Mouse-ear cress), this protein is Protein PUTATIVE RECOMBINATION INITIATION DEFECT 1.